Reading from the N-terminus, the 232-residue chain is Ubiquinone biosynthesis O-methyltransferase (232 aa).

S-adenosyl-L-methionine is bound by residues arginine 36, glycine 55, aspartate 76, and leucine 120.

The protein belongs to the methyltransferase superfamily. UbiG/COQ3 family.

It carries out the reaction a 3-demethylubiquinol + S-adenosyl-L-methionine = a ubiquinol + S-adenosyl-L-homocysteine + H(+). The enzyme catalyses a 3-(all-trans-polyprenyl)benzene-1,2-diol + S-adenosyl-L-methionine = a 2-methoxy-6-(all-trans-polyprenyl)phenol + S-adenosyl-L-homocysteine + H(+). Its pathway is cofactor biosynthesis; ubiquinone biosynthesis. In terms of biological role, O-methyltransferase that catalyzes the 2 O-methylation steps in the ubiquinone biosynthetic pathway. The sequence is that of Ubiquinone biosynthesis O-methyltransferase from Pseudomonas aeruginosa (strain UCBPP-PA14).